A 360-amino-acid polypeptide reads, in one-letter code: Alpha-ketoglutarate dependent kainoid synthase (360 aa).

In terms of domain architecture, Fe2OG dioxygenase spans 200 to 310 (MFFSNRIYPE…RASLISFYEP (111 aa)). Positions 225, 227, and 286 each coordinate Fe cation. Arg301 serves as a coordination point for 2-oxoglutarate.

Belongs to the iron/ascorbate-dependent oxidoreductase family. Requires Fe(2+) as cofactor.

It catalyses the reaction prekainate + 2-oxoglutarate + O2 = kainate + succinate + CO2 + H2O. It carries out the reaction prekainate + 2-oxoglutarate + O2 + H(+) = kainate lactone + succinate + CO2 + H2O. It functions in the pathway secondary metabolite biosynthesis. With respect to regulation, inhibited by the iron chelator EDTA. Iron/ascorbate-dependent oxidoreductase: part of the gene cluster that mediates the biosynthesis of kainic acid (KA) and derivatives, natural products with neurochemical activity acting as ionotropic glutamate receptor (iGluR) agonists, thus being neurotoxins. Catalyzes the conversion of prekainic acid to kainic acid and kainic acid lactone. In Digenea simplex (Marine red alga), this protein is Alpha-ketoglutarate dependent kainoid synthase.